Here is a 382-residue protein sequence, read N- to C-terminus: Chaperone protein DnaJ (382 aa).

The region spanning 5–70 is the J domain; the sequence is DYYDLLGLSK…DKRAAYDRYG (66 aa). A CR-type zinc finger spans residues 138–216; that stretch reads GTKVPINYVT…CSGSGRVRDE (79 aa). 8 residues coordinate Zn(2+): Cys-151, Cys-154, Cys-168, Cys-171, Cys-190, Cys-193, Cys-204, and Cys-207. CXXCXGXG motif repeat units lie at residues 151–158, 168–175, 190–197, and 204–211; these read CSSCSGSG, CNTCHGAG, CHVCNGEG, and CKKCSGSG.

This sequence belongs to the DnaJ family. As to quaternary structure, homodimer. Zn(2+) is required as a cofactor.

The protein resides in the cytoplasm. In terms of biological role, participates actively in the response to hyperosmotic and heat shock by preventing the aggregation of stress-denatured proteins and by disaggregating proteins, also in an autonomous, DnaK-independent fashion. Unfolded proteins bind initially to DnaJ; upon interaction with the DnaJ-bound protein, DnaK hydrolyzes its bound ATP, resulting in the formation of a stable complex. GrpE releases ADP from DnaK; ATP binding to DnaK triggers the release of the substrate protein, thus completing the reaction cycle. Several rounds of ATP-dependent interactions between DnaJ, DnaK and GrpE are required for fully efficient folding. Also involved, together with DnaK and GrpE, in the DNA replication of plasmids through activation of initiation proteins. In Ehrlichia ruminantium (strain Gardel), this protein is Chaperone protein DnaJ.